We begin with the raw amino-acid sequence, 279 residues long: Acetylglutamate kinase (279 aa).

Residues 64-65, R86, and N177 each bind substrate; that span reads GG.

The protein belongs to the acetylglutamate kinase family. ArgB subfamily.

The protein localises to the cytoplasm. It catalyses the reaction N-acetyl-L-glutamate + ATP = N-acetyl-L-glutamyl 5-phosphate + ADP. It participates in amino-acid biosynthesis; L-arginine biosynthesis; N(2)-acetyl-L-ornithine from L-glutamate: step 2/4. In terms of biological role, catalyzes the ATP-dependent phosphorylation of N-acetyl-L-glutamate. This chain is Acetylglutamate kinase, found in Campylobacter jejuni subsp. jejuni serotype O:6 (strain 81116 / NCTC 11828).